Here is a 128-residue protein sequence, read N- to C-terminus: MAIWQGASRRLSTGAKVWRAAKKHKREMGRPAAETQVSDKIKRKIVRCRGANLKVKLEKTNYANVFDQANKVCKKVVVTNVIDNKANKHYIRRNVMTKGAIIETEMGKAKVTSRPGQDGVVNAILLTE.

This sequence belongs to the eukaryotic ribosomal protein eS8 family. Part of the 30S ribosomal subunit.

This is Small ribosomal subunit protein eS8 from Methanococcus maripaludis (strain DSM 14266 / JCM 13030 / NBRC 101832 / S2 / LL).